A 468-amino-acid chain; its full sequence is MSKQQIGVVGMAVMGRNLALNIESRGYTVSVFNRSREKTEEVIAENTGKKLVPYYTVQEFVESLETPRRILLMVKAGAGTDSAIDSLKPYLDKGDIIIDGGNTFFQDTIRRNRELSAEGFNFIGTGVSGGEEGALKGPSIMPGGQKEAYELVAPILKQIAAVAEDGEPCVTYIGADGAGHYVKMVHNGIEYGDMQLIAEAYALLKGGLALSNEELAQTFTEWNEGELSSYLIDITKDIFTKKDEEGKYLVDVILDEAANKGTGKWTSQSSLDLGEPLSLITESVFARYISSLKDQRVAASKVLSGPQAQPVGDKAGFIEKVRRALYLGKIVSYAQGFSQLRAASDEYNWDLNYGEIAKIFRAGCIIRAQFLQKITDAYAQNAGIANLLLAPYFKQIADDYQQALRDVVAYAVQNGIPVPTVSAAIAYYDSYRSAVLPANLIQAQRDYFGAHTYKRTDKEGVFHTEWLE.

Residues 10 to 15 (GMAVMG), 33 to 35 (NRS), 74 to 76 (VKA), and Asn-102 contribute to the NADP(+) site. Residues Asn-102 and 128-130 (SGG) each bind substrate. The Proton acceptor role is filled by Lys-183. Substrate is bound at residue 186-187 (HN). Glu-190 serves as the catalytic Proton donor. The substrate site is built by Tyr-191, Lys-260, Arg-287, Arg-445, and His-451.

Belongs to the 6-phosphogluconate dehydrogenase family. In terms of assembly, homodimer.

It carries out the reaction 6-phospho-D-gluconate + NADP(+) = D-ribulose 5-phosphate + CO2 + NADPH. It participates in carbohydrate degradation; pentose phosphate pathway; D-ribulose 5-phosphate from D-glucose 6-phosphate (oxidative stage): step 3/3. In terms of biological role, catalyzes the oxidative decarboxylation of 6-phosphogluconate to ribulose 5-phosphate and CO(2), with concomitant reduction of NADP to NADPH. The polypeptide is 6-phosphogluconate dehydrogenase, decarboxylating (gnd) (Klebsiella pneumoniae).